Reading from the N-terminus, the 505-residue chain is AMP phosphorylase (505 aa).

AMP contacts are provided by residues Gly170, 196 to 201, and Thr205; that span reads SRAITS. Asp258 acts as the Proton donor in catalysis. The AMP site is built by Ser266 and Lys290.

Belongs to the thymidine/pyrimidine-nucleoside phosphorylase family. Type 2 subfamily.

The catalysed reaction is AMP + phosphate = alpha-D-ribose 1,5-bisphosphate + adenine. It carries out the reaction CMP + phosphate = cytosine + alpha-D-ribose 1,5-bisphosphate. It catalyses the reaction UMP + phosphate = alpha-D-ribose 1,5-bisphosphate + uracil. Its function is as follows. Catalyzes the conversion of AMP and phosphate to adenine and ribose 1,5-bisphosphate (R15P). Exhibits phosphorylase activity toward CMP and UMP in addition to AMP. Functions in an archaeal AMP degradation pathway, together with R15P isomerase and RubisCO. The protein is AMP phosphorylase of Methanococcus maripaludis (strain C7 / ATCC BAA-1331).